A 207-amino-acid chain; its full sequence is Casparian strip membrane protein 3 (207 aa).

Topologically, residues 1 to 45 are cytoplasmic; sequence MDSTKSTEETAINIPRESSSTKHKIAVAAVKAVATPHKRGGMKRG. The helical transmembrane segment at 46 to 66 threads the bilayer; the sequence is VAIFDFILRICALAAALAATA. The Extracellular segment spans residues 67–95; the sequence is TMGTTDQTLPFFTQFFQFQASYDDLPTFT. The helical transmembrane segment at 96–116 threads the bilayer; that stretch reads FFVIANAIASGYLVLSLPFSI. The Cytoplasmic segment spans residues 117 to 128; that stretch reads VAIVRPHVTGVK. The chain crosses the membrane as a helical span at residues 129-149; it reads LLLLILDTVLVAFTTAAAASA. Over 150–181 the chain is Extracellular; that stretch reads AAIVYLAHNGNSNTNWFAICQQFNDFCQRTSG. Residues 182 to 202 traverse the membrane as a helical segment; that stretch reads AVVASFIAAAIFIFLVVLSAV. The Cytoplasmic segment spans residues 203–207; sequence ALRRH.

This sequence belongs to the Casparian strip membrane proteins (CASP) family. As to quaternary structure, homodimer and heterodimers.

The protein localises to the cell membrane. Functionally, regulates membrane-cell wall junctions and localized cell wall deposition. Required for establishment of the Casparian strip membrane domain (CSD) and the subsequent formation of Casparian strips, a cell wall modification of the root endodermis that determines an apoplastic barrier between the intraorganismal apoplasm and the extraorganismal apoplasm and prevents lateral diffusion. This Erythranthe guttata (Yellow monkey flower) protein is Casparian strip membrane protein 3.